We begin with the raw amino-acid sequence, 504 residues long: Cytochrome P450 4A25 (504 aa).

Helical transmembrane passes span 6–26 (LASA…LLLL) and 110–130 (APVL…LLNG). C451 is a binding site for heme.

The protein belongs to the cytochrome P450 family. The cofactor is heme.

The protein resides in the endoplasmic reticulum membrane. It carries out the reaction an omega-methyl-long-chain fatty acid + reduced [NADPH--hemoprotein reductase] + O2 = an omega-hydroxy-long-chain fatty acid + oxidized [NADPH--hemoprotein reductase] + H2O + H(+). Catalyzes the omega- and (omega-1)-hydroxylation of various fatty acids such as laurate and palmitate. Has no activity toward taurochenodeoxycholic acid. The protein is Cytochrome P450 4A25 (CYP4A25) of Sus scrofa (Pig).